Consider the following 307-residue polypeptide: tRNA dimethylallyltransferase 1 (307 aa).

10 to 17 (GPTASGKT) contributes to the ATP binding site. 12–17 (TASGKT) contributes to the substrate binding site. Residues 35–38 (DSRQ) are interaction with substrate tRNA.

Belongs to the IPP transferase family. As to quaternary structure, monomer. It depends on Mg(2+) as a cofactor.

The catalysed reaction is adenosine(37) in tRNA + dimethylallyl diphosphate = N(6)-dimethylallyladenosine(37) in tRNA + diphosphate. Catalyzes the transfer of a dimethylallyl group onto the adenine at position 37 in tRNAs that read codons beginning with uridine, leading to the formation of N6-(dimethylallyl)adenosine (i(6)A). In Geotalea daltonii (strain DSM 22248 / JCM 15807 / FRC-32) (Geobacter daltonii), this protein is tRNA dimethylallyltransferase 1.